We begin with the raw amino-acid sequence, 532 residues long: Bone morphogenetic protein receptor type-1A (532 aa).

The N-terminal stretch at 1–23 (MTQLYTYIRLLGACLFIISHVQG) is a signal peptide. Topologically, residues 24-152 (QNLDSMLHGT…IGPFFDGSVR (129 aa)) are extracellular. 3 disulfide bridges follow: cysteine 61-cysteine 82, cysteine 63-cysteine 67, and cysteine 76-cysteine 100. A glycan (N-linked (GlcNAc...) asparagine) is linked at asparagine 73. Residues 107 to 109 (DFQ) form a mediates specificity for BMP ligand region. Cystine bridges form between cysteine 110–cysteine 124 and cysteine 125–cysteine 130. The helical transmembrane segment at 153–176 (WLAVLISMAVCIVAMIVFSSCFCY) threads the bilayer. Residues 177–532 (KHYCKSISSR…KMVESQDVKI (356 aa)) are Cytoplasmic-facing. The GS domain occupies 204–233 (ESLKDLIDQSQSSGSGSGLPLLVQRTIAKQ). Positions 234-525 (IQMVRQVGKG…RIKKTLAKMV (292 aa)) constitute a Protein kinase domain. ATP is bound by residues 240–248 (VGKGRYGEV) and lysine 261. The active-site Proton acceptor is aspartate 362.

It belongs to the protein kinase superfamily. TKL Ser/Thr protein kinase family. TGFB receptor subfamily. Interacts with low affinity with GDF5; positively regulates chondrocyte differentiation. Interacts with BMP4. Interacts with SCUBE3. Interacts with TSC22D1/TSC-22. Interacts with BMP2; the interaction may induce HAMP expression. Interacts with BMP6. Interacts with heterodimers composed of BMP2 and BMP6 in vitro; the interaction may induce HAMP expression. Mg(2+) is required as a cofactor. The cofactor is Mn(2+). Post-translationally, glycosylated.

The protein localises to the cell membrane. The protein resides in the cell surface. It carries out the reaction L-threonyl-[receptor-protein] + ATP = O-phospho-L-threonyl-[receptor-protein] + ADP + H(+). The catalysed reaction is L-seryl-[receptor-protein] + ATP = O-phospho-L-seryl-[receptor-protein] + ADP + H(+). Its function is as follows. On ligand binding, forms a receptor complex consisting of two type II and two type I transmembrane serine/threonine kinases. Type II receptors phosphorylate and activate type I receptors which autophosphorylate, then bind and activate SMAD transcriptional regulators. Receptor for BMP2, BMP4, GDF5 and GDF6. Positively regulates chondrocyte differentiation through GDF5 interaction. Mediates induction of adipogenesis by GDF6. May promote the expression of HAMP, potentially via its interaction with BMP2. The polypeptide is Bone morphogenetic protein receptor type-1A (Bmpr1a) (Rattus norvegicus (Rat)).